The following is a 427-amino-acid chain: Homeobox protein knotted-1-like 3 (427 aa).

Disordered regions lie at residues 19 to 49 (QTHHQHQQYQSDQPDPNSKPPEPHHSFQPAP) and 272 to 291 (TGVSPGEGTSATMSDDEDDQ). The segment covering 272 to 284 (TGVSPGEGTSATM) has biased composition (polar residues). Residues 330 to 350 (ELKHELKQGYKEKIVDIREEI) form the ELK domain. A DNA-binding region (homeobox; TALE-type) is located at residues 351 to 414 (LRKRRAGKLP…NQRKRNWHSN (64 aa)).

Belongs to the TALE/KNOX homeobox family. As to expression, maximally expressed in sepals, petals and fully expanded leaves. Also expressed in other flower organs and in developing leaves. Low level expression in stem internodes.

The protein localises to the nucleus. This is Homeobox protein knotted-1-like 3 from Malus domestica (Apple).